Reading from the N-terminus, the 354-residue chain is UPF0597 protein PPA0217 (354 aa).

Belongs to the UPF0597 family.

The polypeptide is UPF0597 protein PPA0217 (Cutibacterium acnes (strain DSM 16379 / KPA171202) (Propionibacterium acnes)).